An 85-amino-acid polypeptide reads, in one-letter code: Small ribosomal subunit protein uS17 (85 aa).

This sequence belongs to the universal ribosomal protein uS17 family. As to quaternary structure, part of the 30S ribosomal subunit.

In terms of biological role, one of the primary rRNA binding proteins, it binds specifically to the 5'-end of 16S ribosomal RNA. The polypeptide is Small ribosomal subunit protein uS17 (Desulforudis audaxviator (strain MP104C)).